A 471-amino-acid polypeptide reads, in one-letter code: Glutamate--tRNA ligase (471 aa).

Residues 9–19 (PSPTGYLHVGG) carry the 'HIGH' region motif. Zn(2+) contacts are provided by Cys98, Cys100, Cys125, and His127. The 'KMSKS' region motif lies at 237–241 (KLSKR). Lys240 is a binding site for ATP.

Belongs to the class-I aminoacyl-tRNA synthetase family. Glutamate--tRNA ligase type 1 subfamily. As to quaternary structure, monomer. Zn(2+) is required as a cofactor.

The protein localises to the cytoplasm. It carries out the reaction tRNA(Glu) + L-glutamate + ATP = L-glutamyl-tRNA(Glu) + AMP + diphosphate. Catalyzes the attachment of glutamate to tRNA(Glu) in a two-step reaction: glutamate is first activated by ATP to form Glu-AMP and then transferred to the acceptor end of tRNA(Glu). The sequence is that of Glutamate--tRNA ligase from Escherichia coli O6:K15:H31 (strain 536 / UPEC).